Reading from the N-terminus, the 413-residue chain is Glutamyl-tRNA reductase (413 aa).

Residues 49 to 52 (TCNR), serine 105, 110 to 112 (EPQ), and glutamine 116 contribute to the substrate site. Cysteine 50 acts as the Nucleophile in catalysis. Position 185–190 (185–190 (GAGETI)) interacts with NADP(+).

This sequence belongs to the glutamyl-tRNA reductase family. As to quaternary structure, homodimer.

The enzyme catalyses (S)-4-amino-5-oxopentanoate + tRNA(Glu) + NADP(+) = L-glutamyl-tRNA(Glu) + NADPH + H(+). Its pathway is porphyrin-containing compound metabolism; protoporphyrin-IX biosynthesis; 5-aminolevulinate from L-glutamyl-tRNA(Glu): step 1/2. Catalyzes the NADPH-dependent reduction of glutamyl-tRNA(Glu) to glutamate 1-semialdehyde (GSA). The polypeptide is Glutamyl-tRNA reductase (Coxiella burnetii (strain Dugway 5J108-111)).